The following is a 224-amino-acid chain: ATP-dependent dethiobiotin synthetase BioD (224 aa).

Residue 14–19 (GIGKTV) coordinates ATP. Thr-18 is a Mg(2+) binding site. Residue Lys-39 is part of the active site. A substrate-binding site is contributed by Ser-43. ATP-binding positions include Asp-56, 117-120 (EGVG), and 177-178 (NE). Residues Asp-56 and Glu-117 each coordinate Mg(2+).

It belongs to the dethiobiotin synthetase family. Homodimer. Requires Mg(2+) as cofactor.

It is found in the cytoplasm. It carries out the reaction (7R,8S)-7,8-diammoniononanoate + CO2 + ATP = (4R,5S)-dethiobiotin + ADP + phosphate + 3 H(+). It functions in the pathway cofactor biosynthesis; biotin biosynthesis; biotin from 7,8-diaminononanoate: step 1/2. Catalyzes a mechanistically unusual reaction, the ATP-dependent insertion of CO2 between the N7 and N8 nitrogen atoms of 7,8-diaminopelargonic acid (DAPA, also called 7,8-diammoniononanoate) to form a ureido ring. The protein is ATP-dependent dethiobiotin synthetase BioD of Xanthomonas campestris pv. campestris (strain ATCC 33913 / DSM 3586 / NCPPB 528 / LMG 568 / P 25).